Here is a 34-residue protein sequence, read N- to C-terminus: Protamine-Z1/Z2 (34 aa).

Residues P1–R34 form a disordered region.

In terms of tissue distribution, testis.

Its subcellular location is the nucleus. The protein resides in the chromosome. Functionally, protamines substitute for histones in the chromatin of sperm during the haploid phase of spermatogenesis. They compact sperm DNA into a highly condensed, stable and inactive complex. This chain is Protamine-Z1/Z2, found in Sarda orientalis (Striped bonito).